The chain runs to 984 residues: Probable translation initiation factor IF-2 (984 aa).

The 122-residue stretch at 94–215 (VNGWYSVTVT…LPLLLLRFGI (122 aa)) folds into the DOD-type homing endonuclease domain. The region spanning 391–608 (TTETHNFVAN…LIAGLSQKYL (218 aa)) is the tr-type G domain. Residues 464 to 468 (DTPGH) and 518 to 521 (NKID) contribute to the GTP site.

The protein belongs to the TRAFAC class translation factor GTPase superfamily. Classic translation factor GTPase family. IF-2 subfamily. Post-translationally, this protein undergoes a protein self splicing that involves a post-translational excision of the intervening region (intein) followed by peptide ligation.

In terms of biological role, function in general translation initiation by promoting the binding of the formylmethionine-tRNA to ribosomes. Seems to function along with eIF-2. The protein is Probable translation initiation factor IF-2 (infB) of Pyrococcus furiosus (strain ATCC 43587 / DSM 3638 / JCM 8422 / Vc1).